A 119-amino-acid chain; its full sequence is Large ribosomal subunit protein uL24 (119 aa).

Belongs to the universal ribosomal protein uL24 family. As to quaternary structure, part of the 50S ribosomal subunit.

In terms of biological role, one of two assembly initiator proteins, it binds directly to the 5'-end of the 23S rRNA, where it nucleates assembly of the 50S subunit. Its function is as follows. One of the proteins that surrounds the polypeptide exit tunnel on the outside of the subunit. In Sulfurihydrogenibium sp. (strain YO3AOP1), this protein is Large ribosomal subunit protein uL24.